The chain runs to 226 residues: Thiopurine S-methyltransferase (226 aa).

The S-adenosyl-L-methionine site is built by Trp16, Met51, Glu72, and Arg131.

The protein belongs to the class I-like SAM-binding methyltransferase superfamily. TPMT family.

It is found in the cytoplasm. It carries out the reaction S-adenosyl-L-methionine + a thiopurine = S-adenosyl-L-homocysteine + a thiopurine S-methylether.. This is Thiopurine S-methyltransferase from Francisella tularensis subsp. tularensis (strain SCHU S4 / Schu 4).